We begin with the raw amino-acid sequence, 102 residues long: Nucleoid-associated protein WS1681 (102 aa).

This sequence belongs to the YbaB/EbfC family. As to quaternary structure, homodimer.

The protein resides in the cytoplasm. Its subcellular location is the nucleoid. In terms of biological role, binds to DNA and alters its conformation. May be involved in regulation of gene expression, nucleoid organization and DNA protection. This is Nucleoid-associated protein WS1681 from Wolinella succinogenes (strain ATCC 29543 / DSM 1740 / CCUG 13145 / JCM 31913 / LMG 7466 / NCTC 11488 / FDC 602W) (Vibrio succinogenes).